A 348-amino-acid polypeptide reads, in one-letter code: Sex-lethal homolog (348 aa).

RRM domains lie at 110 to 188 (TNLI…YARP) and 196 to 276 (TNLY…LAEE). Positions 296-310 (GGGGGGGGGGGGGMG) are enriched in gly residues. Positions 296 to 317 (GGGGGGGGGGGGGMGGPPPPPM) are disordered.

The protein localises to the nucleus. In terms of biological role, unknown; apparently not involved in somatic sex determination. In Ceratitis capitata (Mediterranean fruit fly), this protein is Sex-lethal homolog (SXL).